Consider the following 157-residue polypeptide: Siroheme decarboxylase NirG subunit (157 aa).

This sequence belongs to the Ahb/Nir family. Forms a complex composed of NirDL, NirG and NirH. All proteins are required for the total conversion of siroheme to didecarboxysiroheme.

The enzyme catalyses siroheme + 2 H(+) = 12,18-didecarboxysiroheme + 2 CO2. It functions in the pathway porphyrin-containing compound metabolism. In terms of biological role, involved in heme d1 biosynthesis. Catalyzes the decarboxylation of siroheme into didecarboxysiroheme. Siroheme is probably decarboxylated to monodecarboxysiroheme, which is in turn decarboxylated to didecarboxysiroheme. The chain is Siroheme decarboxylase NirG subunit from Paracoccus pantotrophus (Thiosphaera pantotropha).